The primary structure comprises 381 residues: Phosphatidyl-myo-inositol mannosyltransferase (381 aa).

GDP-alpha-D-mannose contacts are provided by Y9 and G16. A 1,2-diacyl-sn-glycero-3-phospho-(1D-myo-inositol) is bound by residues Q18, 69-70 (FN), and R75. GDP-alpha-D-mannose is bound by residues R204, 209–210 (RK), 251–253 (LDD), R256, 274–278 (ESFGI), and E282.

The protein belongs to the glycosyltransferase group 1 family. Glycosyltransferase 4 subfamily. In terms of assembly, monomer. The cofactor is Mg(2+).

The protein resides in the cell membrane. The catalysed reaction is a 1,2-diacyl-sn-glycero-3-phospho-(1D-myo-inositol) + GDP-alpha-D-mannose = a 1,2-diacyl-sn-glycero-3-phospho-[alpha-D-mannopyranosyl-(1&lt;-&gt;6)-D-myo-inositol] + GDP + H(+). It functions in the pathway phospholipid metabolism; phosphatidylinositol metabolism. Functionally, involved in the biosynthesis of phosphatidyl-myo-inositol mannosides (PIM) which are early precursors in the biosynthesis of lipomannans (LM) and lipoarabinomannans (LAM). Catalyzes the addition of a mannosyl residue from GDP-D-mannose (GDP-Man) to the position 2 of the carrier lipid phosphatidyl-myo-inositol (PI) to generate a phosphatidyl-myo-inositol bearing an alpha-1,2-linked mannose residue (PIM1). This is Phosphatidyl-myo-inositol mannosyltransferase from Propionibacterium freudenreichii subsp. shermanii (strain ATCC 9614 / DSM 4902 / CIP 103027 / NCIMB 8099 / CIRM-BIA1).